We begin with the raw amino-acid sequence, 311 residues long: tRNA-cytidine(32) 2-sulfurtransferase (311 aa).

The short motif at 47-52 (SGGKDS) is the PP-loop motif element. Residues cysteine 122, cysteine 125, and cysteine 213 each coordinate [4Fe-4S] cluster.

It belongs to the TtcA family. Homodimer. The cofactor is Mg(2+). [4Fe-4S] cluster is required as a cofactor.

It localises to the cytoplasm. It carries out the reaction cytidine(32) in tRNA + S-sulfanyl-L-cysteinyl-[cysteine desulfurase] + AH2 + ATP = 2-thiocytidine(32) in tRNA + L-cysteinyl-[cysteine desulfurase] + A + AMP + diphosphate + H(+). Its pathway is tRNA modification. Catalyzes the ATP-dependent 2-thiolation of cytidine in position 32 of tRNA, to form 2-thiocytidine (s(2)C32). The sulfur atoms are provided by the cysteine/cysteine desulfurase (IscS) system. This is tRNA-cytidine(32) 2-sulfurtransferase from Escherichia coli O139:H28 (strain E24377A / ETEC).